The chain runs to 435 residues: Serine/threonine-protein kinase 40 (435 aa).

The span at 1-10 shows a compositional bias: basic and acidic residues; the sequence is MKRRASDRGA. The interval 1 to 25 is disordered; it reads MKRRASDRGAGETSARAKALGSGIS. The Protein kinase domain maps to 35 to 332; that stretch reads FILGPRLGNS…DVLEALSAII (298 aa). ATP is bound by residues 41–49 and lysine 66; that span reads LGNSPVPSI. Residue aspartate 197 is the Proton acceptor of the active site.

The protein belongs to the protein kinase superfamily. CAMK Ser/Thr protein kinase family.

Its subcellular location is the nucleus. The protein localises to the cytoplasm. The catalysed reaction is L-seryl-[protein] + ATP = O-phospho-L-seryl-[protein] + ADP + H(+). It carries out the reaction L-threonyl-[protein] + ATP = O-phospho-L-threonyl-[protein] + ADP + H(+). Its function is as follows. May be a negative regulator of NF-kappa-B and p53-mediated gene transcription. In Pongo abelii (Sumatran orangutan), this protein is Serine/threonine-protein kinase 40 (STK40).